The chain runs to 189 residues: Xanthine phosphoribosyltransferase (189 aa).

Residues leucine 20 and asparagine 27 each coordinate xanthine. 128 to 132 (ANGEA) lines the 5-phospho-alpha-D-ribose 1-diphosphate pocket. Lysine 156 contacts xanthine.

Belongs to the purine/pyrimidine phosphoribosyltransferase family. Xpt subfamily. In terms of assembly, homodimer.

Its subcellular location is the cytoplasm. It catalyses the reaction XMP + diphosphate = xanthine + 5-phospho-alpha-D-ribose 1-diphosphate. Its pathway is purine metabolism; XMP biosynthesis via salvage pathway; XMP from xanthine: step 1/1. Converts the preformed base xanthine, a product of nucleic acid breakdown, to xanthosine 5'-monophosphate (XMP), so it can be reused for RNA or DNA synthesis. The chain is Xanthine phosphoribosyltransferase from Clostridium acetobutylicum (strain ATCC 824 / DSM 792 / JCM 1419 / IAM 19013 / LMG 5710 / NBRC 13948 / NRRL B-527 / VKM B-1787 / 2291 / W).